Consider the following 129-residue polypeptide: Large ribosomal subunit protein bL12 (129 aa).

The protein belongs to the bacterial ribosomal protein bL12 family. Homodimer. Part of the ribosomal stalk of the 50S ribosomal subunit. Forms a multimeric L10(L12)X complex, where L10 forms an elongated spine to which 2 to 4 L12 dimers bind in a sequential fashion. Binds GTP-bound translation factors.

In terms of biological role, forms part of the ribosomal stalk which helps the ribosome interact with GTP-bound translation factors. Is thus essential for accurate translation. The sequence is that of Large ribosomal subunit protein bL12 from Pseudothermotoga lettingae (strain ATCC BAA-301 / DSM 14385 / NBRC 107922 / TMO) (Thermotoga lettingae).